A 420-amino-acid polypeptide reads, in one-letter code: Histidine--tRNA ligase (420 aa).

Belongs to the class-II aminoacyl-tRNA synthetase family. Homodimer.

Its subcellular location is the cytoplasm. It carries out the reaction tRNA(His) + L-histidine + ATP = L-histidyl-tRNA(His) + AMP + diphosphate + H(+). The polypeptide is Histidine--tRNA ligase (Staphylococcus aureus (strain Mu3 / ATCC 700698)).